The primary structure comprises 196 residues: MTATIGHFLQNLCGEYSNQKQAFENPPLFAHIFLRYKPIEHLQPGSILLEQTYAVDPKHPYRLRVIRAEELTSGIIKLWNHTFKEPDRFSSATFDQDCREKIREEDLILLDHCHYQVRQLDDGFHGELEPGCRCIVRRDGKETYLVSSFHLQGDELSTLDRGHDPQTHDRCWGSIAGKFHFQRISHWAENIPETWL.

The protein belongs to the CpcT/CpeT biliprotein lyase family.

In terms of biological role, covalently attaches a chromophore to Cys residue(s) of phycobiliproteins. This Synechococcus sp. (strain WH8020) protein is Chromophore lyase CpcT/CpeT.